The primary structure comprises 158 residues: NAD(P)H-quinone oxidoreductase subunit J, chloroplastic (158 aa).

This sequence belongs to the complex I 30 kDa subunit family. NDH is composed of at least 16 different subunits, 5 of which are encoded in the nucleus.

Its subcellular location is the plastid. It is found in the chloroplast thylakoid membrane. The catalysed reaction is a plastoquinone + NADH + (n+1) H(+)(in) = a plastoquinol + NAD(+) + n H(+)(out). It catalyses the reaction a plastoquinone + NADPH + (n+1) H(+)(in) = a plastoquinol + NADP(+) + n H(+)(out). Functionally, NDH shuttles electrons from NAD(P)H:plastoquinone, via FMN and iron-sulfur (Fe-S) centers, to quinones in the photosynthetic chain and possibly in a chloroplast respiratory chain. The immediate electron acceptor for the enzyme in this species is believed to be plastoquinone. Couples the redox reaction to proton translocation, and thus conserves the redox energy in a proton gradient. The chain is NAD(P)H-quinone oxidoreductase subunit J, chloroplastic from Ceratophyllum demersum (Rigid hornwort).